Consider the following 137-residue polypeptide: ATP synthase epsilon chain, chloroplastic (137 aa).

This sequence belongs to the ATPase epsilon chain family. As to quaternary structure, F-type ATPases have 2 components, CF(1) - the catalytic core - and CF(0) - the membrane proton channel. CF(1) has five subunits: alpha(3), beta(3), gamma(1), delta(1), epsilon(1). CF(0) has three main subunits: a, b and c.

The protein resides in the plastid. Its subcellular location is the chloroplast thylakoid membrane. In terms of biological role, produces ATP from ADP in the presence of a proton gradient across the membrane. In Agrostis stolonifera (Creeping bentgrass), this protein is ATP synthase epsilon chain, chloroplastic.